Here is a 638-residue protein sequence, read N- to C-terminus: Probable lysine-specific demethylase 4F (638 aa).

Residues 15–57 (IMTFYPTMEEFADFNTYVAYMESQGAHRAGLAKVIPPKEWKAR) form the JmjN domain. 2-oxoglutarate is bound at residue Y133. One can recognise a JmjC domain in the interval 143–309 (EESTKQWNLG…YGKVASQCSC (167 aa)). Fe cation is bound by residues H189 and E191. 2-oxoglutarate contacts are provided by N199 and K207. C235 and H241 together coordinate Zn(2+). K242 serves as a coordination point for 2-oxoglutarate. H277 contributes to the Fe cation binding site. Positions 307 and 309 each coordinate Zn(2+). The disordered stretch occupies residues 426-474 (PCRGCGRGRGRGRGRGRRPRELGTEETTVQSAAKRRLSVGTGSRAPGRK). The segment covering 431-443 (GRGRGRGRGRGRR) has biased composition (basic residues).

It belongs to the JHDM3 histone demethylase family. Fe(2+) serves as cofactor.

The protein resides in the nucleus. The enzyme catalyses N(6),N(6),N(6)-trimethyl-L-lysyl(9)-[histone H3] + 2 2-oxoglutarate + 2 O2 = N(6)-methyl-L-lysyl(9)-[histone H3] + 2 formaldehyde + 2 succinate + 2 CO2. Functionally, probable histone demethylase that specifically demethylates 'Lys-9' of histone H3, thereby playing a central role in histone code. The polypeptide is Probable lysine-specific demethylase 4F (Homo sapiens (Human)).